A 221-amino-acid chain; its full sequence is Stromal cell-derived factor 2-like protein 1 (221 aa).

Positions 1–28 (MWSAGSGRAAGPALLGILLALSLSGGRA) are cleaved as a signal peptide. 3 MIR domains span residues 33–87 (AGLV…IRGG), 95–150 (GSPV…VRCS), and 151–205 (GQHW…AMEG). Positions 218-221 (HDEL) match the Prevents secretion from ER motif.

It is found in the endoplasmic reticulum lumen. This Bos taurus (Bovine) protein is Stromal cell-derived factor 2-like protein 1 (SDF2L1).